Here is a 365-residue protein sequence, read N- to C-terminus: Succinate--CoA ligase [ADP-forming] subunit beta (365 aa).

In terms of domain architecture, ATP-grasp spans 9–230 (KEIFRAEGIS…EMEEYEPEEF (222 aa)). ATP-binding positions include lysine 45, 52–54 (GRG), glutamate 90, isoleucine 93, and glutamate 98. Positions 190 and 203 each coordinate Mg(2+). Residues asparagine 244 and 300–302 (GIT) each bind substrate.

It belongs to the succinate/malate CoA ligase beta subunit family. Heterotetramer of two alpha and two beta subunits. Mg(2+) is required as a cofactor.

The catalysed reaction is succinate + ATP + CoA = succinyl-CoA + ADP + phosphate. It catalyses the reaction GTP + succinate + CoA = succinyl-CoA + GDP + phosphate. It functions in the pathway carbohydrate metabolism; tricarboxylic acid cycle; succinate from succinyl-CoA (ligase route): step 1/1. Functionally, succinyl-CoA synthetase functions in the citric acid cycle (TCA), coupling the hydrolysis of succinyl-CoA to the synthesis of either ATP or GTP and thus represents the only step of substrate-level phosphorylation in the TCA. The beta subunit provides nucleotide specificity of the enzyme and binds the substrate succinate, while the binding sites for coenzyme A and phosphate are found in the alpha subunit. The sequence is that of Succinate--CoA ligase [ADP-forming] subunit beta from Methanothermobacter thermautotrophicus (strain ATCC 29096 / DSM 1053 / JCM 10044 / NBRC 100330 / Delta H) (Methanobacterium thermoautotrophicum).